The following is an 83-amino-acid chain: Cytochrome c6 (83 aa).

Heme c is bound by residues C14, C17, and H18. K24 is modified (N6-methyllysine; partial). M59 contacts heme c.

This sequence belongs to the cytochrome c family. PetJ subfamily. Monomer. Post-translationally, binds 1 heme c group covalently per subunit. In terms of processing, 50% of the molecules were found to be monomethylated at Lys-24.

It localises to the plastid. The protein localises to the chloroplast thylakoid lumen. Functionally, functions as an electron carrier between membrane-bound cytochrome b6-f and photosystem I in oxygenic photosynthesis. This Diacronema lutheri (Unicellular marine alga) protein is Cytochrome c6 (petJ).